Consider the following 841-residue polypeptide: uncharacterized protein (841 aa).

An N-terminal signal peptide occupies residues 1–31 (MKIERYFKAIARAFIITFLFSLILQDNGVLA).

It is found in the secreted. This is an uncharacterized protein from Schizosaccharomyces pombe (strain 972 / ATCC 24843) (Fission yeast).